The sequence spans 404 residues: MSRRSSRLQAKQQPQASQTDSPQEAQIIQAKKRKTAQDVKKRKEEVTKKHQYEIRNCWPPVLSGGISPCIIIETPHKEIGTSDFSRFTNYRFKNLFINPSPLPDLSWGCSQDVWLNMLKKETRYVHDKHFEVLHSELEPQMRSILLDWLLEVCEVYTLHRETFYLAQDFFDRFMLTQKDINKNMLQLIGITSLFIASKLEEIYAPKLQEFAYVTDGACSEEDILRMELAILKALKWELCPVTVISWLNLFLQVDALKDAPKVLLPQYSQEKFIQIAQLLDLCILAIDSLEFQYRILAAAALCHFTSIEVVKKASGLEWDNISECVDWMVPFVSVVKSTSPAKLKIFKKISMEDRHNIQTHTNYLAMLDEVNYVNTFRKEGQLSPVCNGGIMTPPKSTEKPPGKH.

The disordered stretch occupies residues Met-1–Glu-45. The span at Arg-7–Gln-26 shows a compositional bias: polar residues. Phosphoserine is present on Ser-21. Over residues Thr-35 to Glu-45 the composition is skewed to basic and acidic residues. Lys-348 carries the N6-lactoyllysine modification. Position 383 is a phosphoserine (Ser-383). At Thr-392 the chain carries Phosphothreonine.

Belongs to the cyclin family. Cyclin E subfamily. As to quaternary structure, interacts with the CDK2 (in vivo) and CDK3 (in vitro) protein kinases to form a serine/threonine kinase holoenzyme complex. The cyclin subunit imparts substrate specificity to the complex. Phosphorylation by CDK2 triggers its release from CDK2 and degradation via the ubiquitin proteasome pathway. Post-translationally, lactylated at Lys-348. Delactylated by SIRT3.

It is found in the nucleus. Essential for the control of the cell cycle at the late G1 and early S phase. The sequence is that of G1/S-specific cyclin-E2 (CCNE2) from Bos taurus (Bovine).